A 262-amino-acid chain; its full sequence is Phosphate import ATP-binding protein PstB (262 aa).

The ABC transporter domain maps to 15-257; it reads AKASNLNLWY…PQKSKTEQYI (243 aa). 47–54 is an ATP binding site; it reads GPSGCGKS.

Belongs to the ABC transporter superfamily. Phosphate importer (TC 3.A.1.7) family. The complex is composed of two ATP-binding proteins (PstB), two transmembrane proteins (PstC and PstA) and a solute-binding protein (PstS).

It is found in the cell inner membrane. It catalyses the reaction phosphate(out) + ATP + H2O = ADP + 2 phosphate(in) + H(+). Its function is as follows. Part of the ABC transporter complex PstSACB involved in phosphate import. Responsible for energy coupling to the transport system. The sequence is that of Phosphate import ATP-binding protein PstB from Wolinella succinogenes (strain ATCC 29543 / DSM 1740 / CCUG 13145 / JCM 31913 / LMG 7466 / NCTC 11488 / FDC 602W) (Vibrio succinogenes).